Here is a 55-residue protein sequence, read N- to C-terminus: ATP synthase F(0) complex subunit 8 (55 aa).

The helical transmembrane segment at 4–24 (LNPAPWFMIFMFTWAIFLTIL) threads the bilayer. A disordered region spans residues 34-55 (PNEPSPQGMTTPKTAPWNWPWH).

The protein belongs to the ATPase protein 8 family. Component of the ATP synthase complex composed at least of ATP5F1A/subunit alpha, ATP5F1B/subunit beta, ATP5MC1/subunit c (homooctomer), MT-ATP6/subunit a, MT-ATP8/subunit 8, ATP5ME/subunit e, ATP5MF/subunit f, ATP5MG/subunit g, ATP5MK/subunit k, ATP5MJ/subunit j, ATP5F1C/subunit gamma, ATP5F1D/subunit delta, ATP5F1E/subunit epsilon, ATP5PF/subunit F6, ATP5PB/subunit b, ATP5PD/subunit d, ATP5PO/subunit OSCP. ATP synthase complex consists of a soluble F(1) head domain (subunits alpha(3) and beta(3)) - the catalytic core - and a membrane F(0) domain - the membrane proton channel (subunits c, a, 8, e, f, g, k and j). These two domains are linked by a central stalk (subunits gamma, delta, and epsilon) rotating inside the F1 region and a stationary peripheral stalk (subunits F6, b, d, and OSCP).

The protein resides in the mitochondrion membrane. In terms of biological role, subunit 8, of the mitochondrial membrane ATP synthase complex (F(1)F(0) ATP synthase or Complex V) that produces ATP from ADP in the presence of a proton gradient across the membrane which is generated by electron transport complexes of the respiratory chain. ATP synthase complex consist of a soluble F(1) head domain - the catalytic core - and a membrane F(1) domain - the membrane proton channel. These two domains are linked by a central stalk rotating inside the F(1) region and a stationary peripheral stalk. During catalysis, ATP synthesis in the catalytic domain of F(1) is coupled via a rotary mechanism of the central stalk subunits to proton translocation. In vivo, can only synthesize ATP although its ATP hydrolase activity can be activated artificially in vitro. Part of the complex F(0) domain. This Gadus morhua (Atlantic cod) protein is ATP synthase F(0) complex subunit 8.